We begin with the raw amino-acid sequence, 509 residues long: MDIRAAEISAILKDQIKNFGQEAEVTEVGQVLSVGDGIARVYGLDNVQAGEMVEFENGTRGMALNLETDNVGVVIFGADREIKEGQTVKRTRAIVDAPVGKGLLGRVVDALGNPIDGKGPIQFTERKRVDVKAPGIIPRKSVNEPMATGLKAIDALIPIGRGQRELIIGDRQTGKTAIALDTILNQKPLNAQPDEKIKLYCVYVAVGQKRSTVAQFVKVLEEQGALEYSIVVAATASDPAPMQYLAPFTGCTMGEYFRDNGMHAVIIYDDLSKQAVAYRQMSLLLRRPPGREAYPGDVFYLHSRLLERAAKLNETQGAGSLTALPVIETQANDVSAYIPTNVISITDGQIFLETDLFFQGIRPAVNVGLSVSRVGSSAQTKAMKKVAGKIKGELAQYREMAAFAQFGSDLDAATQRLLNRGSRLTELLKQPQFSPLKMEEQVCVIWAGTNGYLDALPLGKVRAFEDGLLSLLRGKHADLLNTIRDTRDLSDDSAAKLKAAVEGFAKTFS.

An ATP-binding site is contributed by 169–176; sequence GDRQTGKT.

Belongs to the ATPase alpha/beta chains family. In terms of assembly, F-type ATPases have 2 components, CF(1) - the catalytic core - and CF(0) - the membrane proton channel. CF(1) has five subunits: alpha(3), beta(3), gamma(1), delta(1), epsilon(1). CF(0) has four main subunits: a(1), b(1), b'(1) and c(9-12).

Its subcellular location is the cell inner membrane. The enzyme catalyses ATP + H2O + 4 H(+)(in) = ADP + phosphate + 5 H(+)(out). Its function is as follows. Produces ATP from ADP in the presence of a proton gradient across the membrane. The alpha chain is a regulatory subunit. The protein is ATP synthase subunit alpha of Bradyrhizobium sp. (strain BTAi1 / ATCC BAA-1182).